Here is a 273-residue protein sequence, read N- to C-terminus: Mitochondrial distribution and morphology protein 12 (273 aa).

Positions 1 to 260 constitute an SMP-LTD domain; sequence MSFDINWEQL…WPSWINFDFY (260 aa). The tract at residues 76 to 98 is disordered; it reads MSAEEETEGSDDEGYGGDRVRNR. The segment covering 78-90 has biased composition (acidic residues); sequence AEEETEGSDDEGY.

The protein belongs to the MDM12 family. Component of the ER-mitochondria encounter structure (ERMES) or MDM complex, composed of MMM1, MDM10, MDM12 and MDM34. An MMM1 homodimer associates with one molecule of MDM12 on each side in a pairwise head-to-tail manner, and the SMP-LTD domains of MMM1 and MDM12 generate a continuous hydrophobic tunnel for phospholipid trafficking.

It is found in the mitochondrion outer membrane. The protein localises to the endoplasmic reticulum membrane. Component of the ERMES/MDM complex, which serves as a molecular tether to connect the endoplasmic reticulum (ER) and mitochondria. Components of this complex are involved in the control of mitochondrial shape and protein biogenesis, and function in nonvesicular lipid trafficking between the ER and mitochondria. MDM12 is required for the interaction of the ER-resident membrane protein MMM1 and the outer mitochondrial membrane-resident beta-barrel protein MDM10. The MDM12-MMM1 subcomplex functions in the major beta-barrel assembly pathway that is responsible for biogenesis of all mitochondrial outer membrane beta-barrel proteins, and acts in a late step after the SAM complex. The MDM10-MDM12-MMM1 subcomplex further acts in the TOM40-specific pathway after the action of the MDM12-MMM1 complex. Essential for establishing and maintaining the structure of mitochondria and maintenance of mtDNA nucleoids. This Vanderwaltozyma polyspora (strain ATCC 22028 / DSM 70294 / BCRC 21397 / CBS 2163 / NBRC 10782 / NRRL Y-8283 / UCD 57-17) (Kluyveromyces polysporus) protein is Mitochondrial distribution and morphology protein 12.